We begin with the raw amino-acid sequence, 1073 residues long: MMKVIWFSSLICLVIQCSGDSGPIICAGPIHSNKSAGIPHLLGYSEKICQIDRLIHVSSWLRNHSQFQGYVGQRGGRSQVSYYPAENSYSRWSGLLSPCDADWLGMLVVKKAKESDMIVPGPSYKGKVFFERPTFDGYVGWGCGSGKSRTESGELCSSDSGTSSGLLPSDRVLWIGDVACQPMTPIPEETFLELKSFSQSEFPDICKIDGIVFNQCEGESLPQPFDVAWMDVGHSHKIIMREHKTKWVQESSSKDFVCYKEGTGPCSESEEKACKTSGSCRGDMQFCKVAGCEHGEEASEAKCRCSLVHKPGEVVVSYGGMRVRPKCYGFSRMMATLEVNPPEQRIGQCTGCHLECINGGVRLITLTSELRSATVCASHFCSSASSGKKSTEIHFHSGSLVGKTAIHVKGALVDGTEFTFEGSCMFPDGCDAVDCTFCREFLKNPQCYPAKKWLFIIIVILLGYAGLMLLTNVLKAIGVWGSWVIAPVKLMFAIIKKLMRTVSCLVGKLMDRGRQVIHEEIGENGEGNQDDVRIEMARPRRVRHWMYSPVILTILAIGLAEGCDEMVHADSKLVSCRQGSGNMKECITTGRALLPAVNPGQEACLHFTAPGSPDSKCLKIKVKRINLKCKKSSSYFVPDARSRCTSVRRCRWAGDCQSGCPPHFTSNSFSDDWAGKMDRAGLGFSGCSDGCGGAACGCFNAAPSCIFWRKWVENPHGIIWKVSPCAAWVPSAVIELTMPSGEVRTFHPMSGIPTQVFKGVSVTYLGSDMEVSGLTDLCEIEELKSKKLALAPCNQAGMGVVGKVGEIQCSSEESARTIKKDGCIWNADLVGIELRVDDAVCYSKITSVEAVANYSAIPTTIGGLRFERSHDSQGKISGSPLDITAIRGSFSVNYRGLRLSLSEITATCTGEVTNVSGCYSCMTGAKVSIKLHSSKNSTAHVRCKGDETAFSVLEGVHSYIVSLSFDHAVVDEQCQLNCGGHESQVTLKGNLIFLDVPKFVDGSYMQTYHSTVPTGANIPSPTDWLNALFGNGLSRWILGVIGVLLGGLALFFLIMFLLKLGTKQVFRSRTKLA.

The signal sequence occupies residues 1–19 (MMKVIWFSSLICLVIQCSG). The Lumenal portion of the chain corresponds to 20 to 453 (DSGPIICAGP…NPQCYPAKKW (434 aa)). Cys26 and Cys49 are oxidised to a cystine. Asn33 and Asn63 each carry an N-linked (GlcNAc...) asparagine; by host glycan. Disulfide bonds link Cys143/Cys156, Cys180/Cys327, Cys206/Cys216, Cys258/Cys305, Cys287/Cys292, Cys349/Cys352, Cys356/Cys424, and Cys376/Cys381. The helical transmembrane segment at 454–474 (LFIIIVILLGYAGLMLLTNVL) threads the bilayer. Residues 475 to 521 (KAIGVWGSWVIAPVKLMFAIIKKLMRTVSCLVGKLMDRGRQVIHEEI) are golgi retention signal. Residues 475–535 (KAIGVWGSWV…EGNQDDVRIE (61 aa)) are Cytoplasmic-facing. The tract at residues 536–562 (MARPRRVRHWMYSPVILTILAIGLAEG) is internal signal sequence for glycoprotein C. Intrachain disulfides connect Cys563–Cys604, Cys576–Cys586, Cys629–Cys725, Cys644–Cys841, Cys650–Cys698, Cys656–Cys705, Cys660–Cys687, Cys691–Cys696, Cys778–Cys793, and Cys809–Cys823. Topologically, residues 563–1036 (CDEMVHADSK…ALFGNGLSRW (474 aa)) are lumenal. A fusion loop region spans residues 650–656 (CRWAGDC). A fusion loop region spans residues 691–705 (CGGAACGCFNAAPSC). Asn853 and Asn914 each carry an N-linked (GlcNAc...) asparagine; by host glycan. Disulfide bonds link Cys908–Cys978, Cys918–Cys921, and Cys943–Cys974. An N-linked (GlcNAc...) asparagine; by host glycan is attached at Asn936. Residues 1037-1057 (ILGVIGVLLGGLALFFLIMFL) traverse the membrane as a helical segment. Residues 1058–1073 (LKLGTKQVFRSRTKLA) are Cytoplasmic-facing.

Belongs to the phlebovirus envelope glycoprotein family. Homodimer. Heterodimer with glycoprotein C. Homotrimer (postfusion). In terms of assembly, heterodimer with glycoprotein N. Post-translationally, specific enzymatic cleavages in vivo yield mature proteins including glycoprotein C and glycoprotein N. The cytoplasmic tail is Palmitoylated. In terms of processing, glycosylated. Post-translationally, palmitoylated.

The protein resides in the virion membrane. It localises to the host Golgi apparatus membrane. It is found in the host endoplasmic reticulum membrane. Functionally, structural component of the virion that interacts with glycoprotein C. It shields the hydrophobic fusion loops of the glycoprotein C, preventing premature fusion. The glycoprotein protrusions are arranged on an icosahedral lattice, with T=12 triangulation. They are able to attach the virion to the host cell receptor CD209/DC-SIGN and to promote fusion of membranes with the late endosome after clathrin-mediated endocytosis of the virion. Plays a role in the packaging of ribonucleoproteins and polymerase during virus assembly. Structural component of the virion that interacts with glycoprotein N. Acts as a class II fusion protein that is activated upon acidification and subsequent repositioning of the glycoprotein N. The glycoprotein protrusions are arranged on an icosahedral lattice, with T=12 triangulation. They are able to attach the virion to the host cell receptor CD209/DC-SIGN and to promote fusion of membranes with the late endosome after clathrin-mediated endocytosis of the virion. The polypeptide is Envelopment polyprotein (GP) (SFTS phlebovirus (isolate SFTSV/Human/China/HB29/2010) (Severe fever with thrombocytopenia virus)).